Here is a 474-residue protein sequence, read N- to C-terminus: Trehalose-6-phosphate synthase (474 aa).

Arg10 serves as a coordination point for D-glucose 6-phosphate. Position 22-23 (22-23) interacts with UDP-alpha-D-glucose; it reads GG. D-glucose 6-phosphate contacts are provided by Tyr77 and Asp131. UDP-alpha-D-glucose contacts are provided by Arg263 and Lys268. Arg301 contributes to the D-glucose 6-phosphate binding site. UDP-alpha-D-glucose-binding positions include Phe340 and 366 to 370; that span reads LVAKE.

Belongs to the glycosyltransferase 20 family. Homotetramer.

It carries out the reaction D-glucose 6-phosphate + UDP-alpha-D-glucose = alpha,alpha-trehalose 6-phosphate + UDP + H(+). It participates in glycan biosynthesis; trehalose biosynthesis. Probably involved in the osmoprotection via the biosynthesis of trehalose. Catalyzes the transfer of glucose from UDP-alpha-D-glucose (UDP-Glc) to D-glucose 6-phosphate (Glc-6-P) to form trehalose-6-phosphate. Acts with retention of the anomeric configuration of the UDP-sugar donor. This Klebsiella pneumoniae subsp. pneumoniae (strain ATCC 700721 / MGH 78578) protein is Trehalose-6-phosphate synthase.